Consider the following 552-residue polypeptide: Protein FAM234A (552 aa).

The disordered stretch occupies residues 1–40 (MMDDKDLEAEIHPLKNEDKKSQENLGNLPKTEDNLKNKPV). The Cytoplasmic segment spans residues 1–49 (MMDDKDLEAEIHPLKNEDKKSQENLGNLPKTEDNLKNKPVPSRLSRCRT). Residues 8 to 22 (EAEIHPLKNEDKKSQ) show a composition bias toward basic and acidic residues. Residue Ser-21 is modified to Phosphoserine. A helical; Signal-anchor for type II membrane protein transmembrane segment spans residues 50–70 (VAFFLSLFICLFVVFVLSFII). Topologically, residues 71-552 (PCPDRPSSED…FSRLRYRSEV (482 aa)) are extracellular. 4 N-linked (GlcNAc...) asparagine glycosylation sites follow: Asn-116, Asn-119, Asn-314, and Asn-473.

This sequence belongs to the FAM234 family.

Its subcellular location is the membrane. The protein is Protein FAM234A (Fam234a) of Rattus norvegicus (Rat).